Here is a 721-residue protein sequence, read N- to C-terminus: Fatty acid oxidation complex subunit alpha (721 aa).

The segment at 1 to 190 (MIYEGKAITV…KVGAVDAVVA (190 aa)) is enoyl-CoA hydratase/isomerase. Position 297 (aspartate 297) interacts with substrate. Residues 312 to 721 (KDVKQAAVLG…SFFGQASSEE (410 aa)) are 3-hydroxyacyl-CoA dehydrogenase. NAD(+) is bound by residues methionine 325, aspartate 344, 401–403 (VVE), lysine 408, and serine 430. Catalysis depends on histidine 451, which acts as the For 3-hydroxyacyl-CoA dehydrogenase activity. NAD(+) is bound at residue asparagine 454. Residues asparagine 501 and tyrosine 660 each coordinate substrate.

In the N-terminal section; belongs to the enoyl-CoA hydratase/isomerase family. The protein in the C-terminal section; belongs to the 3-hydroxyacyl-CoA dehydrogenase family. As to quaternary structure, heterotetramer of two alpha chains (FadB) and two beta chains (FadA).

The catalysed reaction is a (3S)-3-hydroxyacyl-CoA + NAD(+) = a 3-oxoacyl-CoA + NADH + H(+). It carries out the reaction a (3S)-3-hydroxyacyl-CoA = a (2E)-enoyl-CoA + H2O. The enzyme catalyses a 4-saturated-(3S)-3-hydroxyacyl-CoA = a (3E)-enoyl-CoA + H2O. It catalyses the reaction (3S)-3-hydroxybutanoyl-CoA = (3R)-3-hydroxybutanoyl-CoA. The catalysed reaction is a (3Z)-enoyl-CoA = a 4-saturated (2E)-enoyl-CoA. It carries out the reaction a (3E)-enoyl-CoA = a 4-saturated (2E)-enoyl-CoA. It participates in lipid metabolism; fatty acid beta-oxidation. Its function is as follows. Involved in the aerobic and anaerobic degradation of long-chain fatty acids via beta-oxidation cycle. Catalyzes the formation of 3-oxoacyl-CoA from enoyl-CoA via L-3-hydroxyacyl-CoA. It can also use D-3-hydroxyacyl-CoA and cis-3-enoyl-CoA as substrate. This is Fatty acid oxidation complex subunit alpha from Pseudomonas savastanoi pv. phaseolicola (strain 1448A / Race 6) (Pseudomonas syringae pv. phaseolicola (strain 1448A / Race 6)).